The primary structure comprises 710 residues: DNA ligase (710 aa).

The disordered stretch occupies residues 1–26 (MPEDAIGQQVPPEQEAAGAEPTSAAR). NAD(+) contacts are provided by residues 53–57 (DAEFD), 102–103 (SL), and E132. The N6-AMP-lysine intermediate role is filled by K134. 4 residues coordinate NAD(+): R155, E196, K312, and K336. Zn(2+) is bound by residues C430, C433, C449, and C455. A BRCT domain is found at 619–708 (EGPRPLEGMT…PDAAREVARV (90 aa)).

The protein belongs to the NAD-dependent DNA ligase family. LigA subfamily. It depends on Mg(2+) as a cofactor. Requires Mn(2+) as cofactor.

The enzyme catalyses NAD(+) + (deoxyribonucleotide)n-3'-hydroxyl + 5'-phospho-(deoxyribonucleotide)m = (deoxyribonucleotide)n+m + AMP + beta-nicotinamide D-nucleotide.. DNA ligase that catalyzes the formation of phosphodiester linkages between 5'-phosphoryl and 3'-hydroxyl groups in double-stranded DNA using NAD as a coenzyme and as the energy source for the reaction. It is essential for DNA replication and repair of damaged DNA. In Salinispora arenicola (strain CNS-205), this protein is DNA ligase.